The primary structure comprises 292 residues: NAD kinase (292 aa).

Catalysis depends on Asp-73, which acts as the Proton acceptor. NAD(+) is bound by residues 73 to 74, 147 to 148, His-158, Arg-175, Asp-177, 188 to 193, and Gln-247; these read DG, NE, and TAYSLS.

The protein belongs to the NAD kinase family. The cofactor is a divalent metal cation.

Its subcellular location is the cytoplasm. It carries out the reaction NAD(+) + ATP = ADP + NADP(+) + H(+). In terms of biological role, involved in the regulation of the intracellular balance of NAD and NADP, and is a key enzyme in the biosynthesis of NADP. Catalyzes specifically the phosphorylation on 2'-hydroxyl of the adenosine moiety of NAD to yield NADP. The protein is NAD kinase of Edwardsiella ictaluri (strain 93-146).